The chain runs to 40 residues: Photosystem II reaction center protein J (40 aa).

A helical transmembrane segment spans residues 8–28; the sequence is IPLWLVGTVTGIPVIGLIGVF.

Belongs to the PsbJ family. In terms of assembly, PSII is composed of 1 copy each of membrane proteins PsbA, PsbB, PsbC, PsbD, PsbE, PsbF, PsbH, PsbI, PsbJ, PsbK, PsbL, PsbM, PsbT, PsbX, PsbY, PsbZ, Psb30/Ycf12, at least 3 peripheral proteins of the oxygen-evolving complex and a large number of cofactors. It forms dimeric complexes.

The protein resides in the plastid. It localises to the chloroplast thylakoid membrane. Its function is as follows. One of the components of the core complex of photosystem II (PSII). PSII is a light-driven water:plastoquinone oxidoreductase that uses light energy to abstract electrons from H(2)O, generating O(2) and a proton gradient subsequently used for ATP formation. It consists of a core antenna complex that captures photons, and an electron transfer chain that converts photonic excitation into a charge separation. The polypeptide is Photosystem II reaction center protein J (Musa acuminata (Banana)).